The sequence spans 46 residues: Diuretic hormone (46 aa).

Isoleucine 46 carries the isoleucine amide modification.

This sequence belongs to the sauvagine/corticotropin-releasing factor/urotensin I family.

The protein resides in the secreted. In terms of biological role, regulation of fluid secretion. Stimulates primary urine secretion by Malpighian tubules and causes a dose-dependent stimulation of cAMP levels in the tubules. In Acheta domesticus (House cricket), this protein is Diuretic hormone.